The following is a 309-amino-acid chain: NAD-dependent protein deacylase sirtuin-5A, mitochondrial (309 aa).

A mitochondrion-targeting transit peptide spans 1 to 35 (MILLTFHTRRLVSHAYCGLKPASQKKSIALEMTRP). A Deacetylase sirtuin-type domain is found at 36–306 (SSNLADFREA…PPALARHETE (271 aa)). Residue 57 to 76 (GAGVSAESGVPTFRGAGGYW) participates in NAD(+) binding. Residues Y101 and R104 each contribute to the substrate site. 139–142 (QNID) provides a ligand contact to NAD(+). The active-site Proton acceptor is the H157. Positions 165, 168, 206, and 211 each coordinate Zn(2+). Residues 248-250 (GTS), 274-276 (NME), and C292 contribute to the NAD(+) site.

This sequence belongs to the sirtuin family. Class III subfamily. Requires Zn(2+) as cofactor.

It is found in the mitochondrion. It localises to the cytoplasm. The protein resides in the cytosol. Its subcellular location is the nucleus. The enzyme catalyses N(6)-malonyl-L-lysyl-[protein] + NAD(+) + H2O = 2''-O-malonyl-ADP-D-ribose + nicotinamide + L-lysyl-[protein]. It carries out the reaction N(6)-succinyl-L-lysyl-[protein] + NAD(+) + H2O = 2''-O-succinyl-ADP-D-ribose + nicotinamide + L-lysyl-[protein]. The catalysed reaction is N(6)-glutaryl-L-lysyl-[protein] + NAD(+) + H2O = 2''-O-glutaryl-ADP-D-ribose + nicotinamide + L-lysyl-[protein]. NAD-dependent lysine demalonylase, desuccinylase and deglutarylase that specifically removes malonyl, succinyl and glutaryl groups on target proteins. Has weak NAD-dependent protein deacetylase activity; however this activity may not be physiologically relevant in vivo. The sequence is that of NAD-dependent protein deacylase sirtuin-5A, mitochondrial (sirt5-a) from Xenopus laevis (African clawed frog).